The following is a 224-amino-acid chain: Tumor protein D52 (224 aa).

Ser-36 and Ser-40 each carry phosphoserine. Residues 62 to 114 are a coiled coil; that stretch reads AATISATETLSEEEQEELRRELAKVEEEIQTLSQVLAAKEKHLAEIKRKLGIN. The residue at position 176 (Ser-176) is a Phosphoserine. The disordered stretch occupies residues 187–224; it reads KVGGTKPAGGDFGEVLNSAANASATTTEPLPEKTQESL. Over residues 203-213 the composition is skewed to low complexity; the sequence is NSAANASATTT. Ser-223 is subject to Phosphoserine.

It belongs to the TPD52 family. As to quaternary structure, forms a homodimer or heterodimer with other members of the family. All isoforms interact with several 14-3-3 proteins. Isoform 2 is expressed in colon, breast, prostate, pancreas and kidney tumor cell lines. Isoform 2 is expressed at high levels in kidney, prostate, brain, small intestine and pancreas, at moderate levels in placenta and colon, at low levels in lung, liver and heart, and at very low levels in spleen, thymus, peripheral mononuclear blood cells, testis and ovary.

The polypeptide is Tumor protein D52 (TPD52) (Homo sapiens (Human)).